Reading from the N-terminus, the 484-residue chain is EF-hand calcium-binding domain-containing protein 14 (484 aa).

Disordered stretches follow at residues 1–48 (MKKR…TDEE), 227–255 (GSME…HSES), and 313–395 (EQRT…FTSD). Positions 37–48 (PDSDSESSTDEE) are enriched in acidic residues. 3 stretches are compositionally biased toward polar residues: residues 228–239 (SMENNGSNQILP), 315–324 (RTNVSSSTME), and 335–347 (LVTN…QAQS). EF-hand domains are found at residues 423–452 (SSIK…WNSL) and 453–484 (GSAM…ALGI). Asp-466, Asn-468, Asp-470, Arg-472, and Glu-477 together coordinate Ca(2+).

This is EF-hand calcium-binding domain-containing protein 14 (Efcab14) from Mus musculus (Mouse).